We begin with the raw amino-acid sequence, 219 residues long: Factor in the germline alpha (219 aa).

The bHLH domain maps to 65 to 117; the sequence is ERRRVANAKERERIKNLNRGFARLKALVPFLPQSRKPSKVDILKGATEYIQVL. Positions 124–151 are disordered; that stretch reads AKDSKKQDPDEQSYSNNSSESHTSSARQ. Positions 136 to 148 are enriched in low complexity; the sequence is SYSNNSSESHTSS.

Heterodimer with TCF3/isoform E12. In terms of tissue distribution, germ cells. Expressed in the fetal ovary, but not by a range of other tissues. Expression increases across mid-gestation, rising some 40-fold by the time of primordial follicle formation.

The protein resides in the nucleus. Germline specific transcription factor implicated in postnatal oocyte-specific gene expression. Plays a key regulatory role in the expression of multiple oocyte-specific genes, including those that initiate folliculogenesis and those that encode the zona pellucida (ZP1, ZP2 and ZP3) required for fertilization and early embryonic survival. Essential for oocytes to survive and form primordial follicles. The persistence of FIGLA in adult females suggests that it may regulate additional pathways that are essential for normal ovarian development. Binds to the E-box (5'-CANNTG-3') of the ZPs (ZP1, ZP2, ZP3) promoters. In Homo sapiens (Human), this protein is Factor in the germline alpha (FIGLA).